Consider the following 494-residue polypeptide: Folate-biopterin transporter (494 aa).

A run of 12 helical transmembrane segments spans residues 31 to 51 (APSW…VLGL), 64 to 84 (LGLS…PWIL), 104 to 124 (SYLW…AAWV), 133 to 153 (VLLF…SLVV), 170 to 190 (LTWG…GALL), 197 to 217 (TVFA…FLIS), 246 to 266 (ILLP…ESAF), 284 to 303 (VRLV…QRFL), 310 to 330 (VIMG…LILI), 346 to 366 (LGDS…VLVL), 375 to 395 (IEAT…VLSF), and 415 to 435 (LALL…FLGL). Residues 441–461 (PQVKDKTEKEDNPDDPGDRLV) form a disordered region.

The protein belongs to the major facilitator superfamily. Folate-biopterin transporter (TC 2.A.71) family.

The protein localises to the cell membrane. In terms of biological role, mediates folate monoglutamate transport involved in tetrahydrofolate biosynthesis. It also mediates transport of antifolates, such as methotrexate and aminopterin. In Synechocystis sp. (strain ATCC 27184 / PCC 6803 / Kazusa), this protein is Folate-biopterin transporter.